The primary structure comprises 376 residues: N-acetyldiaminopimelate deacetylase (376 aa).

The active site involves aspartate 69. Glutamate 128 functions as the Proton acceptor in the catalytic mechanism.

The protein belongs to the peptidase M20A family. N-acetyldiaminopimelate deacetylase subfamily.

It catalyses the reaction N-acetyl-(2S,6S)-2,6-diaminopimelate + H2O = (2S,6S)-2,6-diaminopimelate + acetate. It functions in the pathway amino-acid biosynthesis; L-lysine biosynthesis via DAP pathway; LL-2,6-diaminopimelate from (S)-tetrahydrodipicolinate (acetylase route): step 3/3. Its function is as follows. Catalyzes the conversion of N-acetyl-diaminopimelate to diaminopimelate and acetate. The chain is N-acetyldiaminopimelate deacetylase from Streptococcus pneumoniae (strain P1031).